The following is an 830-amino-acid chain: DNA helicase MCM8 (830 aa).

The MCM domain occupies 392 to 599 (LLKLIVNSLC…QHDHLLSEHV (208 aa)). 444-451 (GDPGLGKS) provides a ligand contact to ATP. Serine 620 carries the phosphoserine modification.

The protein belongs to the MCM family. In terms of assembly, component of the MCM8-MCM9 complex, which forms a hexamer composed of MCM8 and MCM9. Interacts with the DNA mismatch repair (MMR) complex composed at least of MSH2, MSH3, MSH6, PMS1 and MLH1. Interacts with RAD51; the interaction recruits RAD51 to DNA damage sites. Interacts with the MRN complex composed of MRE11, RAD50 and NBN/NBS1. Interacts with CDC6 and ORC2. Interacts with HROB; the interaction recruits the MCM8-MCM9 complex to DNA damage sites.

It localises to the nucleus. It is found in the chromosome. The catalysed reaction is ATP + H2O = ADP + phosphate + H(+). Component of the MCM8-MCM9 complex, a complex involved in the repair of double-stranded DNA breaks (DBSs) and DNA interstrand cross-links (ICLs) by homologous recombination (HR). Required for DNA resection by the MRE11-RAD50-NBN/NBS1 (MRN) complex by recruiting the MRN complex to the repair site and by promoting the complex nuclease activity. Probably by regulating the localization of the MNR complex, indirectly regulates the recruitment of downstream effector RAD51 to DNA damage sites including DBSs and ICLs. The MCM8-MCM9 complex is dispensable for DNA replication and S phase progression. However, may play a non-essential for DNA replication: may be involved in the activation of the prereplicative complex (pre-RC) during G(1) phase by recruiting CDC6 to the origin recognition complex (ORC). Probably by regulating HR, plays a key role during gametogenesis. Stabilizes MCM9 protein. This is DNA helicase MCM8 (Mcm8) from Rattus norvegicus (Rat).